The following is a 786-amino-acid chain: ATP-dependent RNA helicase SUPV3L1, mitochondrial (786 aa).

The transit peptide at 1-22 (MSFSRALLWARLPAGRQAGHRA) directs the protein to the mitochondrion. At lysine 99 the chain carries N6-acetyllysine. The Helicase ATP-binding domain occupies 194-334 (DARAMQRKII…AIDLVMELMY (141 aa)). 207 to 214 (GPTNSGKT) provides a ligand contact to ATP. Lysine 220 carries the post-translational modification N6-acetyllysine. The Helicase C-terminal domain maps to 353–518 (VLDHALESLD…GLHPTAEQIE (166 aa)). Positions 650–786 (PDASLIRDLQ…RRKKKEPDSD (137 aa)) are interaction with LAMTOR5, important for protein stability. Disordered regions lie at residues 690–730 (GFPS…DAGE) and 749–786 (KQLEKEWMTQQTEHNKEKTESGTHPKGTRRKKKEPDSD). The span at 693–705 (SGSQSRLSGTLKS) shows a compositional bias: polar residues. Serine 725 bears the Phosphoserine mark. Over residues 749–771 (KQLEKEWMTQQTEHNKEKTESGT) the composition is skewed to basic and acidic residues.

The protein belongs to the helicase family. Homodimer; in free form. Component of the mitochondrial degradosome (mtEXO) complex which is a heteropentamer containing 2 copies of SUPV3L1 and 3 copies of PNPT1. As part of mitochondrial degradosome complex, interacts with GRSF1 in a RNA-dependent manner; the interaction enhances the activity of the complex. Interacts with LAMTOR5/HBXIP, WRN and BLM. Requires Mg(2+) as cofactor. Mn(2+) is required as a cofactor. As to expression, broadly expressed.

Its subcellular location is the nucleus. The protein resides in the mitochondrion matrix. It localises to the mitochondrion nucleoid. It catalyses the reaction ATP + H2O = ADP + phosphate + H(+). With respect to regulation, helicase activity toward DNA substrate is inhibited by micromolar concentrations of 5,6-dichloro-1-(beta-D-ribofuranosyl)benzotriazole (DRBT) and 4,5,6,7-tetrabromobenzotriazole (TBBT). Helicase activity toward RNA substrate is inhibited by elevated concentrations of TBBT. Inhibited by some ring-expanded nucleoside analogs. Major helicase player in mitochondrial RNA metabolism. Component of the mitochondrial degradosome (mtEXO) complex, that degrades 3' overhang double-stranded RNA with a 3'-to-5' directionality in an ATP-dependent manner. Involved in the degradation of non-coding mitochondrial transcripts (MT-ncRNA) and tRNA-like molecules. ATPase and ATP-dependent multisubstrate helicase, able to unwind double-stranded (ds) DNA and RNA, and RNA/DNA heteroduplexes in the 5'-to-3' direction. Plays a role in the RNA surveillance system in mitochondria; regulates the stability of mature mRNAs, the removal of aberrantly formed mRNAs and the rapid degradation of non coding processing intermediates. Also implicated in recombination and chromatin maintenance pathways. May protect cells from apoptosis. Associates with mitochondrial DNA. This chain is ATP-dependent RNA helicase SUPV3L1, mitochondrial (SUPV3L1), found in Homo sapiens (Human).